A 192-amino-acid chain; its full sequence is Large ribosomal subunit protein bL9 (192 aa).

Residues 173 to 192 (ALRPEDFFDPEADGVDEDEA) are disordered. Positions 179 to 192 (FFDPEADGVDEDEA) are enriched in acidic residues.

Belongs to the bacterial ribosomal protein bL9 family.

In terms of biological role, binds to the 23S rRNA. In Rhizobium leguminosarum bv. trifolii, this protein is Large ribosomal subunit protein bL9 (rplI).